The primary structure comprises 632 residues: Tail spike protein (632 aa).

The Peptidase S74 domain occupies 505-630; sequence SDARCKTEPL…KRMQEALAAL (126 aa).

Homotrimer. In terms of processing, proteolytic cleavage and release of the chaperone in the host cytosol stabilizes the folded protein. The cleavage gives rise to the mature tail spike protein but is not essential for catalytic activity.

It is found in the virion. Its function is as follows. Functions as a receptor binding protein (RBP) and probably mediates the attachment to the host capsular exopolysaccharides. Displays a depolymerase activity that specifically degrades the K5-type polysaccharides of Escherichia coli capsule. Functionally, the C-terminal chaperone protein mediates homotrimerization and proper folding of the catalytic trimer. In Escherichia virus K5 (Bacteriophage K5), this protein is Tail spike protein (kflA).